A 187-amino-acid polypeptide reads, in one-letter code: NADH-quinone oxidoreductase subunit C 2 (187 aa).

Residues 153-187 (YKDKLNPFGAEGPPPTQPDLATRDIPQGRPSTPES) form a disordered region.

This sequence belongs to the complex I 30 kDa subunit family. In terms of assembly, NDH-1 is composed of 14 different subunits. Subunits NuoB, C, D, E, F, and G constitute the peripheral sector of the complex.

The protein resides in the cell inner membrane. The enzyme catalyses a quinone + NADH + 5 H(+)(in) = a quinol + NAD(+) + 4 H(+)(out). Its function is as follows. NDH-1 shuttles electrons from NADH, via FMN and iron-sulfur (Fe-S) centers, to quinones in the respiratory chain. The immediate electron acceptor for the enzyme in this species is believed to be ubiquinone. Couples the redox reaction to proton translocation (for every two electrons transferred, four hydrogen ions are translocated across the cytoplasmic membrane), and thus conserves the redox energy in a proton gradient. The sequence is that of NADH-quinone oxidoreductase subunit C 2 from Rhizobium etli (strain CIAT 652).